The primary structure comprises 314 residues: 2-methoxy-6-polyprenyl-1,4-benzoquinol methylase, mitochondrial (314 aa).

The N-terminal 19 residues, methionine 1 to arginine 19, are a transit peptide targeting the mitochondrion. Residues threonine 109, aspartate 154, asparagine 186 to serine 187, and serine 203 contribute to the S-adenosyl-L-methionine site.

The protein belongs to the class I-like SAM-binding methyltransferase superfamily. MenG/UbiE family. Component of a multi-subunit COQ enzyme complex.

It localises to the mitochondrion inner membrane. It catalyses the reaction a 2-methoxy-6-(all-trans-polyprenyl)benzene-1,4-diol + S-adenosyl-L-methionine = a 5-methoxy-2-methyl-3-(all-trans-polyprenyl)benzene-1,4-diol + S-adenosyl-L-homocysteine + H(+). It participates in cofactor biosynthesis; ubiquinone biosynthesis. Functionally, methyltransferase required for the conversion of 2-polyprenyl-6-methoxy-1,4-benzoquinol (DDMQH2) to 2-polyprenyl-3-methyl-6-methoxy-1,4-benzoquinol (DMQH2). This Dictyostelium discoideum (Social amoeba) protein is 2-methoxy-6-polyprenyl-1,4-benzoquinol methylase, mitochondrial.